A 536-amino-acid polypeptide reads, in one-letter code: Phosphoenolpyruvate carboxykinase (ATP) (536 aa).

Substrate contacts are provided by Arg61, Tyr195, and Lys201. Residues Lys201, His220, and 236 to 244 (GLSGTGKTT) contribute to the ATP site. Mn(2+)-binding residues include Lys201 and His220. Position 257 (Asp257) interacts with Mn(2+). The ATP site is built by Glu285, Arg322, and Thr447. Arg322 contributes to the substrate binding site.

Belongs to the phosphoenolpyruvate carboxykinase (ATP) family. Requires Mn(2+) as cofactor.

Its subcellular location is the cytoplasm. The catalysed reaction is oxaloacetate + ATP = phosphoenolpyruvate + ADP + CO2. It participates in carbohydrate biosynthesis; gluconeogenesis. Its function is as follows. Involved in the gluconeogenesis. Catalyzes the conversion of oxaloacetate (OAA) to phosphoenolpyruvate (PEP) through direct phosphoryl transfer between the nucleoside triphosphate and OAA. The protein is Phosphoenolpyruvate carboxykinase (ATP) of Rhizobium etli (strain CIAT 652).